Reading from the N-terminus, the 186-residue chain is UPF0340 protein SEQ_1951 (186 aa).

This sequence belongs to the UPF0340 family.

The sequence is that of UPF0340 protein SEQ_1951 from Streptococcus equi subsp. equi (strain 4047).